The following is a 1085-amino-acid chain: SLIT-ROBO Rho GTPase-activating protein 1 (1085 aa).

Residues 19–314 (SQVKEIRAQL…AVDNLEPRSD (296 aa)) form the F-BAR domain. Positions 351–390 (VQAELMLRYQQLQSRLATLKIENEEVKKTTEATLQTIQDM) form a coiled coil. Ser-416 is modified (phosphoserine). The disordered stretch occupies residues 475 to 496 (YMTTRPPNVPPKPQKHRKSRPR). Residues 506–694 (GDLETFVKDS…TIIIHHETIF (189 aa)) form the Rho-GAP domain. The SH3 domain occupies 743–802 (CEPIEAIAKFDYVGRSARELSFKKGASLLLYHRASEDWWEGRHNGIDGLVPHQYIVVQDM). A compositionally biased stretch (polar residues) spans 808-822 (DTLSQKADSEASSGP). The interval 808-954 (DTLSQKADSE…TGFNDHKPLD (147 aa)) is disordered. Phosphoserine is present on residues Ser-835 and Ser-917. The segment covering 922–931 (SRHDSLKKID) has biased composition (basic and acidic residues). Ser-932 bears the Phosphoserine mark. Residues 937–946 (RSTSSGQYTG) show a composition bias toward polar residues. Positions 956–985 (ETIAQDIEETMNTALNELRELERQSTAKHA) form a coiled coil. Residues 997 to 1011 (KNSPTPATSTESLSP) are compositionally biased toward polar residues. Disordered stretches follow at residues 997–1038 (KNSP…MSTF) and 1051–1085 (KPPA…SCTM). Residue Ser-999 is modified to Phosphoserine. Thr-1001 carries the phosphothreonine modification. Residues 1027–1037 (STSSSSDTMST) show a composition bias toward low complexity. Residue Ser-1032 is modified to Phosphoserine.

As to quaternary structure, homodimer. Forms a heterooligomer with SRGAP2 and SRGAP3 through its F-BAR domain. Interacts with ROBO1, CDC42 and RHOA. Interacts with FASLG. As to expression, expressed in brain, lung, kidney, and testis.

GTPase-activating protein for RhoA and Cdc42 small GTPases. Together with CDC42 seems to be involved in the pathway mediating the repulsive signaling of Robo and Slit proteins in neuronal migration. SLIT2, probably through interaction with ROBO1, increases the interaction of SRGAP1 with ROBO1 and inactivates CDC42. The protein is SLIT-ROBO Rho GTPase-activating protein 1 (SRGAP1) of Homo sapiens (Human).